Consider the following 362-residue polypeptide: Acyl-CoA-binding domain-containing protein 3 (362 aa).

The first 22 residues, 1–22, serve as a signal peptide directing secretion; sequence MEVFLEMLLTAVVALLFSFLLA. Disordered regions lie at residues 132–151 and 193–214; these read QDEQ…SPEN and VEKS…EKTE. Positions 192–221 form a coiled coil; that stretch reads RVEKSSNMVEESDAEAENEEKTELTIEEDD. An ACB domain is found at 231–318; sequence LEKAFAAAVN…VSKEIPGLTK (88 aa). Residues 260 to 264, K286, and Y305 each bind an acyl-CoA; that span reads FGLHK. A disordered region spans residues 329 to 362; sequence METSVGLPPNSGSLEDPTNLVTTGVDESSKNGIP.

This sequence belongs to the ACBP family. As to expression, expressed in roots, stems, leaves, flowers and siliques.

The protein localises to the secreted. It localises to the extracellular space. In terms of biological role, binds medium- and long-chain acyl-CoA esters with very high affinity. Can interact in vitro with arachidonyl-CoA, barely with oleoyl-CoA, but not with palmitoyl-CoA. The protein is Acyl-CoA-binding domain-containing protein 3 (ACBP3) of Arabidopsis thaliana (Mouse-ear cress).